The chain runs to 101 residues: Urease subunit beta (101 aa).

It belongs to the urease beta subunit family. As to quaternary structure, heterotrimer of UreA (gamma), UreB (beta) and UreC (alpha) subunits. Three heterotrimers associate to form the active enzyme.

It localises to the cytoplasm. The catalysed reaction is urea + 2 H2O + H(+) = hydrogencarbonate + 2 NH4(+). The protein operates within nitrogen metabolism; urea degradation; CO(2) and NH(3) from urea (urease route): step 1/1. The protein is Urease subunit beta of Psychromonas ingrahamii (strain DSM 17664 / CCUG 51855 / 37).